A 64-amino-acid polypeptide reads, in one-letter code: Large ribosomal subunit protein bL33 (64 aa).

It belongs to the bacterial ribosomal protein bL33 family.

The chain is Large ribosomal subunit protein bL33 from Picosynechococcus sp. (strain ATCC 27264 / PCC 7002 / PR-6) (Agmenellum quadruplicatum).